A 77-amino-acid chain; its full sequence is Small ribosomal subunit protein bS16 (77 aa).

It belongs to the bacterial ribosomal protein bS16 family.

In Helicobacter hepaticus (strain ATCC 51449 / 3B1), this protein is Small ribosomal subunit protein bS16.